The sequence spans 556 residues: Urocanate hydratase (556 aa).

Residues 52–53 (GG), Q130, 176–178 (GMG), E196, R201, 242–243 (NA), 263–267 (QTSAH), 273–274 (YL), and Y322 each bind NAD(+). Residue C410 is part of the active site. G492 serves as a coordination point for NAD(+).

Belongs to the urocanase family. Requires NAD(+) as cofactor.

It is found in the cytoplasm. The catalysed reaction is 4-imidazolone-5-propanoate = trans-urocanate + H2O. It functions in the pathway amino-acid degradation; L-histidine degradation into L-glutamate; N-formimidoyl-L-glutamate from L-histidine: step 2/3. Its function is as follows. Catalyzes the conversion of urocanate to 4-imidazolone-5-propionate. The chain is Urocanate hydratase from Shewanella piezotolerans (strain WP3 / JCM 13877).